The sequence spans 578 residues: Proline--tRNA ligase (578 aa).

This sequence belongs to the class-II aminoacyl-tRNA synthetase family. ProS type 1 subfamily. In terms of assembly, homodimer.

It is found in the cytoplasm. The enzyme catalyses tRNA(Pro) + L-proline + ATP = L-prolyl-tRNA(Pro) + AMP + diphosphate. In terms of biological role, catalyzes the attachment of proline to tRNA(Pro) in a two-step reaction: proline is first activated by ATP to form Pro-AMP and then transferred to the acceptor end of tRNA(Pro). As ProRS can inadvertently accommodate and process non-cognate amino acids such as alanine and cysteine, to avoid such errors it has two additional distinct editing activities against alanine. One activity is designated as 'pretransfer' editing and involves the tRNA(Pro)-independent hydrolysis of activated Ala-AMP. The other activity is designated 'posttransfer' editing and involves deacylation of mischarged Ala-tRNA(Pro). The misacylated Cys-tRNA(Pro) is not edited by ProRS. This Brachyspira hyodysenteriae (strain ATCC 49526 / WA1) protein is Proline--tRNA ligase.